A 322-amino-acid polypeptide reads, in one-letter code: Ribose-phosphate pyrophosphokinase (322 aa).

ATP-binding positions include 43–45 (DGE) and 102–103 (RQ). Mg(2+)-binding residues include histidine 137 and aspartate 177. Residue lysine 201 is part of the active site. Residues arginine 203, aspartate 227, and 231–235 (DTAGT) each bind D-ribose 5-phosphate.

This sequence belongs to the ribose-phosphate pyrophosphokinase family. Class I subfamily. As to quaternary structure, homohexamer. Mg(2+) serves as cofactor.

It localises to the cytoplasm. It catalyses the reaction D-ribose 5-phosphate + ATP = 5-phospho-alpha-D-ribose 1-diphosphate + AMP + H(+). Its pathway is metabolic intermediate biosynthesis; 5-phospho-alpha-D-ribose 1-diphosphate biosynthesis; 5-phospho-alpha-D-ribose 1-diphosphate from D-ribose 5-phosphate (route I): step 1/1. Functionally, involved in the biosynthesis of the central metabolite phospho-alpha-D-ribosyl-1-pyrophosphate (PRPP) via the transfer of pyrophosphoryl group from ATP to 1-hydroxyl of ribose-5-phosphate (Rib-5-P). This chain is Ribose-phosphate pyrophosphokinase, found in Xylella fastidiosa (strain Temecula1 / ATCC 700964).